A 543-amino-acid chain; its full sequence is CTP synthase (543 aa).

Positions 1 to 265 are amidoligase domain; the sequence is MARYIFITGG…DDEVLAAFAI (265 aa). S13 contributes to the CTP binding site. Residue S13 coordinates UTP. An ATP-binding site is contributed by 14–19; the sequence is SLGKGL. An L-glutamine-binding site is contributed by Y54. D71 is an ATP binding site. Mg(2+) is bound by residues D71 and E139. CTP-binding positions include 146–148, 186–191, and K222; these read DIE and KTKPTQ. Residues 186-191 and K222 contribute to the UTP site; that span reads KTKPTQ. 238-240 serves as a coordination point for ATP; sequence RDA. The region spanning 291-542 is the Glutamine amidotransferase type-1 domain; that stretch reads TIAIVGKYTG…VQAALVQSRL (252 aa). G353 provides a ligand contact to L-glutamine. Catalysis depends on C380, which acts as the Nucleophile; for glutamine hydrolysis. Residues 381–384, E404, and R470 each bind L-glutamine; that span reads FGMQ. Residues H515 and E517 contribute to the active site.

The protein belongs to the CTP synthase family. As to quaternary structure, homotetramer.

It carries out the reaction UTP + L-glutamine + ATP + H2O = CTP + L-glutamate + ADP + phosphate + 2 H(+). The catalysed reaction is L-glutamine + H2O = L-glutamate + NH4(+). The enzyme catalyses UTP + NH4(+) + ATP = CTP + ADP + phosphate + 2 H(+). It participates in pyrimidine metabolism; CTP biosynthesis via de novo pathway; CTP from UDP: step 2/2. Allosterically activated by GTP, when glutamine is the substrate; GTP has no effect on the reaction when ammonia is the substrate. The allosteric effector GTP functions by stabilizing the protein conformation that binds the tetrahedral intermediate(s) formed during glutamine hydrolysis. Inhibited by the product CTP, via allosteric rather than competitive inhibition. Its function is as follows. Catalyzes the ATP-dependent amination of UTP to CTP with either L-glutamine or ammonia as the source of nitrogen. Regulates intracellular CTP levels through interactions with the four ribonucleotide triphosphates. In Rhodopseudomonas palustris (strain ATCC BAA-98 / CGA009), this protein is CTP synthase.